The chain runs to 541 residues: Chaperonin GroEL (541 aa).

Residues 29–32 (TLGP), 86–90 (DGTTT), G413, 477–479 (DAL), and D493 contribute to the ATP site.

This sequence belongs to the chaperonin (HSP60) family. As to quaternary structure, forms a cylinder of 14 subunits composed of two heptameric rings stacked back-to-back. Interacts with the co-chaperonin GroES.

The protein localises to the cytoplasm. It catalyses the reaction ATP + H2O + a folded polypeptide = ADP + phosphate + an unfolded polypeptide.. Functionally, together with its co-chaperonin GroES, plays an essential role in assisting protein folding. The GroEL-GroES system forms a nano-cage that allows encapsulation of the non-native substrate proteins and provides a physical environment optimized to promote and accelerate protein folding. The sequence is that of Chaperonin GroEL from Clostridium botulinum (strain ATCC 19397 / Type A).